An 824-amino-acid chain; its full sequence is 4-methylaminobutanoate oxidase (formaldehyde-forming) (824 aa).

His-67 carries the post-translational modification Pros-8alpha-FAD histidine.

It belongs to the GcvT family. FAD is required as a cofactor.

The catalysed reaction is 4-(methylamino)butanoate + O2 + H2O = 4-aminobutanoate + formaldehyde + H2O2. The protein operates within alkaloid degradation; nicotine degradation. Catalyzes the oxidative demethylation of 4-methylaminobutanoate produced from the pyrrolidine ring of nicotine. To a much lesser extent, can also use sarcosine as substrate, but is not active against dimethylglycine, methylaminopropionitrile, methylaminopropylamine, and alpha-methylaminobutanoate. The protein is 4-methylaminobutanoate oxidase (formaldehyde-forming) (abo) of Paenarthrobacter nicotinovorans (Arthrobacter nicotinovorans).